The following is a 260-amino-acid chain: Phosphate import ATP-binding protein PstB 2 (260 aa).

The region spanning 9–255 (IKVKDLSFYY…PLDSRTRDYV (247 aa)) is the ABC transporter domain. 41–48 (GPSGCGKS) contacts ATP.

This sequence belongs to the ABC transporter superfamily. Phosphate importer (TC 3.A.1.7) family. In terms of assembly, the complex is composed of two ATP-binding proteins (PstB), two transmembrane proteins (PstC and PstA) and a solute-binding protein (PstS).

It localises to the cell inner membrane. It carries out the reaction phosphate(out) + ATP + H2O = ADP + 2 phosphate(in) + H(+). Its function is as follows. Part of the ABC transporter complex PstSACB involved in phosphate import. Responsible for energy coupling to the transport system. In Nostoc sp. (strain PCC 7120 / SAG 25.82 / UTEX 2576), this protein is Phosphate import ATP-binding protein PstB 2.